Here is a 404-residue protein sequence, read N- to C-terminus: Sulfate adenylyltransferase (404 aa).

The protein belongs to the sulfate adenylyltransferase family.

It carries out the reaction sulfate + ATP + H(+) = adenosine 5'-phosphosulfate + diphosphate. It participates in sulfur metabolism; hydrogen sulfide biosynthesis; sulfite from sulfate: step 1/3. The polypeptide is Sulfate adenylyltransferase (Chlorobium chlorochromatii (strain CaD3)).